Reading from the N-terminus, the 559-residue chain is DNA ligase (559 aa).

ATP is bound at residue glutamate 247. Residue lysine 249 is the N6-AMP-lysine intermediate of the active site. ATP is bound by residues arginine 254, arginine 269, glutamate 299, phenylalanine 339, arginine 414, and lysine 420.

Belongs to the ATP-dependent DNA ligase family. Mg(2+) is required as a cofactor.

It catalyses the reaction ATP + (deoxyribonucleotide)n-3'-hydroxyl + 5'-phospho-(deoxyribonucleotide)m = (deoxyribonucleotide)n+m + AMP + diphosphate.. In terms of biological role, DNA ligase that seals nicks in double-stranded DNA during DNA replication, DNA recombination and DNA repair. The sequence is that of DNA ligase from Pyrococcus abyssi (strain GE5 / Orsay).